We begin with the raw amino-acid sequence, 127 residues long: Glycine cleavage system H protein (127 aa).

The region spanning T27–K109 is the Lipoyl-binding domain. Position 68 is an N6-lipoyllysine (K68).

The protein belongs to the GcvH family. As to quaternary structure, the glycine cleavage system is composed of four proteins: P, T, L and H. (R)-lipoate serves as cofactor.

Functionally, the glycine cleavage system catalyzes the degradation of glycine. The H protein shuttles the methylamine group of glycine from the P protein to the T protein. This is Glycine cleavage system H protein from Corynebacterium jeikeium (strain K411).